The chain runs to 429 residues: Cyclin-B2-3 (429 aa).

The segment covering 86–101 (ADHKPHIRDEETKKPD) has biased composition (basic and acidic residues). Residues 86 to 109 (ADHKPHIRDEETKKPDSVSSEEPE) are disordered.

Belongs to the cyclin family. Cyclin AB subfamily.

This is Cyclin-B2-3 (CYCB2-3) from Arabidopsis thaliana (Mouse-ear cress).